The following is a 77-amino-acid chain: U8-lycotoxin-Ls1t (77 aa).

Residues 1–20 (MKLIIFTGLVLFAIVSLIEA) form the signal peptide. A propeptide spanning residues 21–26 (QAENEK) is cleaved from the precursor.

Belongs to the neurotoxin 19 (CSTX) family. 08 (U8-Lctx) subfamily. Contains 4 disulfide bonds. As to expression, expressed by the venom gland.

It is found in the secreted. The protein is U8-lycotoxin-Ls1t of Lycosa singoriensis (Wolf spider).